Reading from the N-terminus, the 441-residue chain is Divalent metal cation transporter MntH (441 aa).

11 helical membrane-spanning segments follow: residues 41-61 (TGIAALLPFVGPAVIASIGYM), 74-94 (AAYGYRLLWVVLAANAIAMLF), 116-136 (HFPAPIVWGMWIASEIAAMAT), 141-161 (FLGGALAFALLCHLPLFAGMI), 183-203 (AAIAALVGVIGACYLGELMIA), 223-243 (AALTIAVGIIGATIMPHTLYL), 271-291 (VVVALGLAGFVNLAMVMMAAS), 311-331 (IPVLGPAAGVLFLVALLTSGV), 360-380 (AVTIAPAFAVVACGCDVTRAM), 381-401 (VASQVVLSFVLPMPMIALLIL), and 419-439 (IVAGTATVVIVGLNAYLVWAA).

This sequence belongs to the NRAMP family.

Its subcellular location is the cell inner membrane. Its function is as follows. H(+)-stimulated, divalent metal cation uptake system. The polypeptide is Divalent metal cation transporter MntH (Burkholderia ambifaria (strain ATCC BAA-244 / DSM 16087 / CCUG 44356 / LMG 19182 / AMMD) (Burkholderia cepacia (strain AMMD))).